The following is a 230-amino-acid chain: UPF0702 transmembrane protein YcaP (230 aa).

Transmembrane regions (helical) follow at residues 16 to 36 (FDFL…VFLF), 48 to 68 (MSLF…DVAF), and 75 to 95 (VPVL…MWLM).

Belongs to the UPF0702 family.

Its subcellular location is the cell membrane. The polypeptide is UPF0702 transmembrane protein YcaP (ycaP) (Escherichia coli (strain K12)).